The sequence spans 705 residues: Elongation factor G (705 aa).

A tr-type G domain is found at 8 to 290; sequence HRYRNIGIMA…GVIHLLPSPA (283 aa). Residues 17 to 24, 88 to 92, and 142 to 145 contribute to the GTP site; these read AHIDAGKT, DTPGH, and NKMD.

The protein belongs to the TRAFAC class translation factor GTPase superfamily. Classic translation factor GTPase family. EF-G/EF-2 subfamily.

It localises to the cytoplasm. Functionally, catalyzes the GTP-dependent ribosomal translocation step during translation elongation. During this step, the ribosome changes from the pre-translocational (PRE) to the post-translocational (POST) state as the newly formed A-site-bound peptidyl-tRNA and P-site-bound deacylated tRNA move to the P and E sites, respectively. Catalyzes the coordinated movement of the two tRNA molecules, the mRNA and conformational changes in the ribosome. This is Elongation factor G from Xylella fastidiosa (strain M12).